The following is a 293-amino-acid chain: Immediate early response gene 5-like protein (293 aa).

Belongs to the IER family.

The protein is Immediate early response gene 5-like protein (ier5l) of Xenopus laevis (African clawed frog).